The following is a 215-amino-acid chain: Ribonuclease (215 aa).

The first 22 residues, 1–22, serve as a signal peptide directing secretion; it reads MKKIVVLLGMLLAPWFSSAVQA. Catalysis depends on residues histidine 62, glutamate 102, and histidine 106. Residues 144–166 form a disordered region; that stretch reads KPLPAQGGSGQCQRLAGPGQHHG.

Belongs to the RNase T2 family.

It localises to the periplasm. The protein resides in the cytoplasm. Its function is as follows. One of the few RNases that cleave the phosphodiester bond between any two nucleotide. Shows a preference for adenylic acid. The polypeptide is Ribonuclease (Aeromonas hydrophila).